Consider the following 277-residue polypeptide: ATP synthase subunit a (277 aa).

The next 5 helical transmembrane spans lie at 40–60 (AWHV…LIIF), 98–118 (SALI…MNLM), 154–174 (DLNL…FYSI), 219–239 (LFGN…IGYF), and 245–265 (FMWA…FMML).

Belongs to the ATPase A chain family. In terms of assembly, F-type ATPases have 2 components, CF(1) - the catalytic core - and CF(0) - the membrane proton channel. CF(1) has five subunits: alpha(3), beta(3), gamma(1), delta(1), epsilon(1). CF(0) has three main subunits: a(1), b(2) and c(9-12). The alpha and beta chains form an alternating ring which encloses part of the gamma chain. CF(1) is attached to CF(0) by a central stalk formed by the gamma and epsilon chains, while a peripheral stalk is formed by the delta and b chains.

It localises to the cell inner membrane. In terms of biological role, key component of the proton channel; it plays a direct role in the translocation of protons across the membrane. In Alteromonas mediterranea (strain DSM 17117 / CIP 110805 / LMG 28347 / Deep ecotype), this protein is ATP synthase subunit a.